The following is an 871-amino-acid chain: Translation initiation factor IF-2 (871 aa).

The interval 1 to 242 (MVDTKNPGDK…PAAKPAPAKQ (242 aa)) is disordered. The segment covering 68 to 91 (PASARTPAAKAPPARAATPAAPRA) has biased composition (low complexity). The span at 115–174 (AKVRAEEERRIAEAEAARRNSKEGIEQAEREAAEARRKAEEERHRQEEEAKRKAEIEAKR) shows a compositional bias: basic and acidic residues. 2 stretches are compositionally biased toward low complexity: residues 182–206 (KPAP…AVAA) and 225–241 (ARPV…APAK). The tr-type G domain occupies 367–538 (PRSPVVTVMG…SLQADLLDLK (172 aa)). A G1 region spans residues 376 to 383 (GHVDHGKT). 376–383 (GHVDHGKT) serves as a coordination point for GTP. Positions 401–405 (GITQH) are G2. The interval 424–427 (DTPG) is G3. Residues 424 to 428 (DTPGH) and 478 to 481 (NKID) each bind GTP. The segment at 478–481 (NKID) is G4. The segment at 514–516 (SAK) is G5.

Belongs to the TRAFAC class translation factor GTPase superfamily. Classic translation factor GTPase family. IF-2 subfamily.

It localises to the cytoplasm. Its function is as follows. One of the essential components for the initiation of protein synthesis. Protects formylmethionyl-tRNA from spontaneous hydrolysis and promotes its binding to the 30S ribosomal subunits. Also involved in the hydrolysis of GTP during the formation of the 70S ribosomal complex. This chain is Translation initiation factor IF-2, found in Nitrobacter winogradskyi (strain ATCC 25391 / DSM 10237 / CIP 104748 / NCIMB 11846 / Nb-255).